The chain runs to 212 residues: Glycerol-3-phosphate acyltransferase (212 aa).

Helical transmembrane passes span 5 to 25, 53 to 73, 80 to 100, 112 to 132, and 138 to 158; these read ALGM…ILVC, VAAA…VWLA, PLYL…PVFF, FGAI…TWLL, and GYSS…VWWF.

Belongs to the PlsY family. In terms of assembly, probably interacts with PlsX.

It localises to the cell inner membrane. It catalyses the reaction an acyl phosphate + sn-glycerol 3-phosphate = a 1-acyl-sn-glycero-3-phosphate + phosphate. It functions in the pathway lipid metabolism; phospholipid metabolism. Its function is as follows. Catalyzes the transfer of an acyl group from acyl-phosphate (acyl-PO(4)) to glycerol-3-phosphate (G3P) to form lysophosphatidic acid (LPA). This enzyme utilizes acyl-phosphate as fatty acyl donor, but not acyl-CoA or acyl-ACP. The protein is Glycerol-3-phosphate acyltransferase of Serratia proteamaculans (strain 568).